Here is a 71-residue protein sequence, read N- to C-terminus: Large ribosomal subunit protein bL31 (71 aa).

Positions 16, 18, 37, and 40 each coordinate Zn(2+).

This sequence belongs to the bacterial ribosomal protein bL31 family. Type A subfamily. Part of the 50S ribosomal subunit. Zn(2+) serves as cofactor.

In terms of biological role, binds the 23S rRNA. The chain is Large ribosomal subunit protein bL31 from Pseudoalteromonas translucida (strain TAC 125).